The primary structure comprises 322 residues: Replication factor C small subunit (322 aa).

45–52 (GPPGVGKT) serves as a coordination point for ATP.

Belongs to the activator 1 small subunits family. RfcS subfamily. Heteromultimer composed of small subunits (RfcS) and large subunits (RfcL).

Part of the RFC clamp loader complex which loads the PCNA sliding clamp onto DNA. This chain is Replication factor C small subunit, found in Methanocella arvoryzae (strain DSM 22066 / NBRC 105507 / MRE50).